Here is a 285-residue protein sequence, read N- to C-terminus: Probable endonuclease 4 (285 aa).

Residues histidine 67, histidine 107, glutamate 144, aspartate 177, histidine 180, histidine 214, aspartate 227, histidine 229, and glutamate 259 each coordinate Zn(2+).

The protein belongs to the AP endonuclease 2 family. It depends on Zn(2+) as a cofactor.

It catalyses the reaction Endonucleolytic cleavage to 5'-phosphooligonucleotide end-products.. Endonuclease IV plays a role in DNA repair. It cleaves phosphodiester bonds at apurinic or apyrimidinic (AP) sites, generating a 3'-hydroxyl group and a 5'-terminal sugar phosphate. The polypeptide is Probable endonuclease 4 (Persephonella marina (strain DSM 14350 / EX-H1)).